The chain runs to 217 residues: GrpE protein homolog 1, mitochondrial (217 aa).

The transit peptide at 1 to 27 (MAAQCVRLARRSLPALALSLRPSPRLL) directs the protein to the mitochondrion. Positions 29-56 (TATKQKNSGQNLEEDMGQSEQKADPPAT) are disordered. A compositionally biased stretch (polar residues) spans 30–39 (ATKQKNSGQN). Lys94 is modified (N6-acetyllysine; alternate). Lys94 carries the post-translational modification N6-succinyllysine; alternate. Lys100 carries the N6-acetyllysine modification. Lys120 carries the N6-succinyllysine modification. Position 215 is an N6-acetyllysine; alternate (Lys215). Residue Lys215 is modified to N6-succinyllysine; alternate.

The protein belongs to the GrpE family. Probable component of the PAM complex at least composed of a mitochondrial HSP70 protein, GRPEL1 or GRPEL2, TIMM44, TIMM16/PAM16 and TIMM14/DNAJC19. Binds to HSP70, HSC70 and HSJ1B.

Its subcellular location is the mitochondrion matrix. Its function is as follows. Essential component of the PAM complex, a complex required for the translocation of transit peptide-containing proteins from the inner membrane into the mitochondrial matrix in an ATP-dependent manner. Seems to control the nucleotide-dependent binding of mitochondrial HSP70 to substrate proteins. The protein is GrpE protein homolog 1, mitochondrial (GRPEL1) of Homo sapiens (Human).